An 881-amino-acid chain; its full sequence is Sodium/sulfate cotransporter 1 (881 aa).

Helical transmembrane passes span 8-28 (GIVAVTFTALAFVVMAADWVG), 31-51 (ITFTVLLAFLTAFDGQIVTVA), 61-81 (GLLTVVFLYWVAEGITQTGGL), 107-127 (MVLSAFLNNTPCVTFMIPILI), 140-160 (LLIPLSYAAVLGGTCTSIGTS), and 186-206 (IFDIAPYGVPYALWGFVFILL). 4 RCK C-terminal domains span residues 212 to 296 (LPGN…EYGL), 318 to 402 (VFSA…IKTN), 407 to 492 (LHAV…FPGL), and 498 to 584 (EQVD…DKSF). A run of 6 helical transmembrane segments spans residues 601–621 (MIIGVLLATGMVLTQIIGGLK), 625–645 (YIHLWPCAVLTAALMLLTGCM), 658–678 (VYLTIAAAFGVSAALEGTGVA), 684–704 (AIISIGKGAGGTGAALIAIYI), 775–795 (FAIVGAPFQVWLMIVAGFILV), and 803–823 (VWIVSWICTAGIVLLPALYFL). Positions 854–881 (SLRRQVSHTRTDDSGSSGSPLPAPKIVA) are disordered.

It belongs to the divalent anion:Na+ symporter (DASS) superfamily. Na+/sulfate symporter (TC 2.A.47.4) family.

The protein localises to the cell membrane. Functionally, na(+)/sulfate cotransporter with a probable high-affinity for sulfate and a proteasome dependent turnover. The protein is Sodium/sulfate cotransporter 1 (SLT1) of Chlamydomonas reinhardtii (Chlamydomonas smithii).